The following is a 201-amino-acid chain: Small ribosomal subunit protein uS4 (201 aa).

The tract at residues 1–42 is disordered; sequence MARYTGPVTRKSRRLGTDLVGGDQSFEKRPYPPGQHGRARIK. The S4 RNA-binding domain occupies 91–157; that stretch reads SRLDNVVYRA…VPFQIARETA (67 aa).

Belongs to the universal ribosomal protein uS4 family. In terms of assembly, part of the 30S ribosomal subunit. Contacts protein S5. The interaction surface between S4 and S5 is involved in control of translational fidelity.

Functionally, one of the primary rRNA binding proteins, it binds directly to 16S rRNA where it nucleates assembly of the body of the 30S subunit. In terms of biological role, with S5 and S12 plays an important role in translational accuracy. The chain is Small ribosomal subunit protein uS4 from Mycobacterium ulcerans (strain Agy99).